A 437-amino-acid polypeptide reads, in one-letter code: Aspartate aminotransferase, mitochondrial (437 aa).

Residues Gly-72, Trp-167, and Asn-220 each contribute to the L-aspartate site. Lys-284 is subject to N6-(pyridoxal phosphate)lysine. Arg-413 is a binding site for L-aspartate.

Belongs to the class-I pyridoxal-phosphate-dependent aminotransferase family. In terms of assembly, homodimer. The cofactor is pyridoxal 5'-phosphate.

The protein localises to the mitochondrion matrix. It catalyses the reaction L-aspartate + 2-oxoglutarate = oxaloacetate + L-glutamate. Plays a key role in amino acid metabolism. Important for metabolite exchange between mitochondria and cytosol. The chain is Aspartate aminotransferase, mitochondrial from Schizosaccharomyces pombe (strain 972 / ATCC 24843) (Fission yeast).